The following is a 398-amino-acid chain: Acetate kinase 1 (398 aa).

Residue Asn-10 coordinates Mg(2+). Lys-17 is an ATP binding site. Arg-89 lines the substrate pocket. Residue Asp-146 is the Proton donor/acceptor of the active site. Residues 206–210 (HLGNG), 281–283 (DCR), and 329–333 (GIGEN) each bind ATP. Glu-384 contacts Mg(2+).

The protein belongs to the acetokinase family. As to quaternary structure, homodimer. The cofactor is Mg(2+). Mn(2+) is required as a cofactor.

The protein localises to the cytoplasm. The catalysed reaction is acetate + ATP = acetyl phosphate + ADP. It participates in metabolic intermediate biosynthesis; acetyl-CoA biosynthesis; acetyl-CoA from acetate: step 1/2. Functionally, catalyzes the formation of acetyl phosphate from acetate and ATP. Can also catalyze the reverse reaction. The polypeptide is Acetate kinase 1 (Neisseria meningitidis serogroup A / serotype 4A (strain DSM 15465 / Z2491)).